We begin with the raw amino-acid sequence, 431 residues long: Ribosomal protein uS12 methylthiotransferase RimO (431 aa).

In terms of domain architecture, MTTase N-terminal spans 4–120; it reads LKLYVIVLGC…LAESINKTKK (117 aa). The [4Fe-4S] cluster site is built by cysteine 13, cysteine 49, cysteine 83, cysteine 150, cysteine 154, and cysteine 157. Positions 136 to 365 constitute a Radical SAM core domain; it reads DSDLPYAYVK…MEVQAEISFL (230 aa). The TRAM domain occupies 368–431; sequence QRLVGKVIDV…TYDLEGELVE (64 aa).

Belongs to the methylthiotransferase family. RimO subfamily. Requires [4Fe-4S] cluster as cofactor.

The protein localises to the cytoplasm. It carries out the reaction L-aspartate(89)-[ribosomal protein uS12]-hydrogen + (sulfur carrier)-SH + AH2 + 2 S-adenosyl-L-methionine = 3-methylsulfanyl-L-aspartate(89)-[ribosomal protein uS12]-hydrogen + (sulfur carrier)-H + 5'-deoxyadenosine + L-methionine + A + S-adenosyl-L-homocysteine + 2 H(+). Functionally, catalyzes the methylthiolation of an aspartic acid residue of ribosomal protein uS12. The polypeptide is Ribosomal protein uS12 methylthiotransferase RimO (Fervidobacterium nodosum (strain ATCC 35602 / DSM 5306 / Rt17-B1)).